Consider the following 400-residue polypeptide: Aspartate aminotransferase (400 aa).

L-aspartate contacts are provided by glycine 37, tryptophan 126, and asparagine 176. At lysine 238 the chain carries N6-(pyridoxal phosphate)lysine. An L-aspartate-binding site is contributed by arginine 367.

Belongs to the class-I pyridoxal-phosphate-dependent aminotransferase family. Homodimer. It depends on pyridoxal 5'-phosphate as a cofactor.

Its subcellular location is the cytoplasm. The enzyme catalyses L-aspartate + 2-oxoglutarate = oxaloacetate + L-glutamate. Functionally, catalyzes the reversible conversion of aspartate and 2-oxoglutarate to glutamate and oxaloacetate. Has very weak prephenate aminotransferase activity. The protein is Aspartate aminotransferase of Musicola paradisiaca (strain Ech703) (Dickeya paradisiaca).